Reading from the N-terminus, the 523-residue chain is NAD(P)H-quinone oxidoreductase subunit 2 (523 aa).

13 helical membrane-spanning segments follow: residues 29-49 (AVLP…VDLA), 57-77 (WVPP…ALQW), 94-114 (LAVA…LISW), 132-152 (LAAT…SIFI), 182-202 (LLVG…LYGL), 221-241 (PIAA…IAAV), 255-275 (PTPV…ALAL), 291-311 (LLFT…ALAQ), 317-337 (MLAY…VCGT), 345-365 (VLYM…IILF), 389-409 (LGLS…GFFG), 424-444 (LLVV…ISVI), and 477-497 (VALI…NPLF).

The protein belongs to the complex I subunit 2 family. NDH-1 can be composed of about 15 different subunits; different subcomplexes with different compositions have been identified which probably have different functions.

It localises to the cellular thylakoid membrane. The catalysed reaction is a plastoquinone + NADH + (n+1) H(+)(in) = a plastoquinol + NAD(+) + n H(+)(out). It carries out the reaction a plastoquinone + NADPH + (n+1) H(+)(in) = a plastoquinol + NADP(+) + n H(+)(out). Its function is as follows. NDH-1 shuttles electrons from an unknown electron donor, via FMN and iron-sulfur (Fe-S) centers, to quinones in the respiratory and/or the photosynthetic chain. The immediate electron acceptor for the enzyme in this species is believed to be plastoquinone. Couples the redox reaction to proton translocation, and thus conserves the redox energy in a proton gradient. Cyanobacterial NDH-1 also plays a role in inorganic carbon-concentration. The chain is NAD(P)H-quinone oxidoreductase subunit 2 from Synechococcus sp. (strain CC9902).